Consider the following 215-residue polypeptide: MTKYSSLSGIFSRKWIFIRGIPTIHFLPPEGPPEIAFAGRSNVGKSSLINALVQQKSLARTSNTPGRTQELNYFVPDGFSGEPGNLPPIALVDMPGYGFAEAPKNLVDAWTHLIFSYLRGRTTLKRVYVLIDSRHGIKKNDGDVLDLLDKAAVSYQIVLTKSDKTKSNELAKLIMITKTKLLKHPAAYPELLVTSSEKALGLEELRAAILQAIAV.

Residues 31-215 enclose the EngB-type G domain; that stretch reads GPPEIAFAGR…RAAILQAIAV (185 aa). GTP contacts are provided by residues 39–46, 66–70, 93–96, 160–163, and 194–196; these read GRSNVGKS, GRTQE, DMPG, TKSD, and TSS. The Mg(2+) site is built by S46 and T68.

Belongs to the TRAFAC class TrmE-Era-EngA-EngB-Septin-like GTPase superfamily. EngB GTPase family. It depends on Mg(2+) as a cofactor.

Its function is as follows. Necessary for normal cell division and for the maintenance of normal septation. This chain is Probable GTP-binding protein EngB, found in Bartonella quintana (strain Toulouse) (Rochalimaea quintana).